Consider the following 232-residue polypeptide: MTLDALKRQAAARALEYVEDGMRLGLGTGSTAKHFVELLGERVRDGLKVVGVPTSEATRADAERCGIPLTTLDDLDRLDLTVDGADEIDPDLNLIKGGGGALLREKIVAAASERMIVIADETKWVAGLGRFPLPIEVIPFGLAATRRAIAEAFTKAGASGQMVVRKGPDGLAFVTDGGHWIFDAHLGQIPDASHLAGLLNPIPGVVEHGLFIGLARVAMLAGAQGIRVVERR.

Substrate-binding positions include 28–31 (TGST), 83–86 (DGAD), and 96–99 (KGGG). Catalysis depends on E105, which acts as the Proton acceptor. K123 contacts substrate.

Belongs to the ribose 5-phosphate isomerase family. Homodimer.

It catalyses the reaction aldehydo-D-ribose 5-phosphate = D-ribulose 5-phosphate. Its pathway is carbohydrate degradation; pentose phosphate pathway; D-ribose 5-phosphate from D-ribulose 5-phosphate (non-oxidative stage): step 1/1. Functionally, catalyzes the reversible conversion of ribose-5-phosphate to ribulose 5-phosphate. This Nitrobacter hamburgensis (strain DSM 10229 / NCIMB 13809 / X14) protein is Ribose-5-phosphate isomerase A.